The chain runs to 367 residues: DNA replication and repair protein RecF (367 aa).

30–37 (GANGSGKT) provides a ligand contact to ATP.

The protein belongs to the RecF family.

It localises to the cytoplasm. In terms of biological role, the RecF protein is involved in DNA metabolism; it is required for DNA replication and normal SOS inducibility. RecF binds preferentially to single-stranded, linear DNA. It also seems to bind ATP. This Pseudomonas syringae pv. syringae (strain B728a) protein is DNA replication and repair protein RecF.